The following is a 153-amino-acid chain: Insulin-like growth factor 1 (153 aa).

The b stretch occupies residues glycine 49 to threonine 77. 3 disulfides stabilise this stretch: cysteine 54/cysteine 96, cysteine 66/cysteine 109, and cysteine 95/cysteine 100. The segment at glycine 78–threonine 89 is c. Residues glycine 90–alanine 110 form an a region. The d stretch occupies residues proline 111–alanine 118. A propeptide spans arginine 119–methionine 153 (e peptide). Residues serine 120–methionine 153 are disordered. Over residues arginine 125–leucine 138 the composition is skewed to basic and acidic residues. Positions serine 142–methionine 153 are enriched in polar residues.

The protein belongs to the insulin family. In terms of assembly, forms a ternary complex with IGFR1 and ITGAV:ITGB3. Forms a ternary complex with IGFR1 and ITGA6:ITGB4. Forms a ternary complex with IGFBP3 and ALS.

It localises to the secreted. Its function is as follows. The insulin-like growth factors, isolated from plasma, are structurally and functionally related to insulin but have a much higher growth-promoting activity. May be a physiological regulator of [1-14C]-2-deoxy-D-glucose (2DG) transport and glycogen synthesis in osteoblasts. Stimulates glucose transport in bone-derived osteoblastic (PyMS) cells and is effective at much lower concentrations than insulin, not only regarding glycogen and DNA synthesis but also with regard to enhancing glucose uptake. May play a role in synapse maturation. Ca(2+)-dependent exocytosis of IGF1 is required for sensory perception of smell in the olfactory bulb. Acts as a ligand for IGF1R. Binds to the alpha subunit of IGF1R, leading to the activation of the intrinsic tyrosine kinase activity which autophosphorylates tyrosine residues in the beta subunit thus initiating a cascade of down-stream signaling events leading to activation of the PI3K-AKT/PKB and the Ras-MAPK pathways. Binds to integrins ITGAV:ITGB3 and ITGA6:ITGB4. Its binding to integrins and subsequent ternary complex formation with integrins and IGFR1 are essential for IGF1 signaling. Induces the phosphorylation and activation of IGFR1, MAPK3/ERK1, MAPK1/ERK2 and AKT1. As part of the MAPK/ERK signaling pathway, acts as a negative regulator of apoptosis in cardiomyocytes via promotion of STUB1/CHIP-mediated ubiquitination and degradation of ICER-type isoforms of CREM. The sequence is that of Insulin-like growth factor 1 from Ailuropoda melanoleuca (Giant panda).